The primary structure comprises 496 residues: Glutamyl-tRNA(Gln) amidotransferase subunit A (496 aa).

Active-site charge relay system residues include lysine 75 and serine 150. Serine 174 serves as the catalytic Acyl-ester intermediate.

Belongs to the amidase family. GatA subfamily. In terms of assembly, heterotrimer of A, B and C subunits.

It carries out the reaction L-glutamyl-tRNA(Gln) + L-glutamine + ATP + H2O = L-glutaminyl-tRNA(Gln) + L-glutamate + ADP + phosphate + H(+). In terms of biological role, allows the formation of correctly charged Gln-tRNA(Gln) through the transamidation of misacylated Glu-tRNA(Gln) in organisms which lack glutaminyl-tRNA synthetase. The reaction takes place in the presence of glutamine and ATP through an activated gamma-phospho-Glu-tRNA(Gln). In Burkholderia pseudomallei (strain 668), this protein is Glutamyl-tRNA(Gln) amidotransferase subunit A.